A 667-amino-acid polypeptide reads, in one-letter code: DNA ligase (667 aa).

NAD(+) contacts are provided by residues 32–36 (DSVYD), 81–82 (SL), and Glu111. The active-site N6-AMP-lysine intermediate is the Lys113. Residues Arg134, Glu168, Lys285, and Lys309 each contribute to the NAD(+) site. Zn(2+) is bound by residues Cys403, Cys406, Cys421, and Cys426. Positions 588–667 (VGDNPFAGKT…DNLIEQLNLI (80 aa)) constitute a BRCT domain.

Belongs to the NAD-dependent DNA ligase family. LigA subfamily. Requires Mg(2+) as cofactor. Mn(2+) is required as a cofactor.

The catalysed reaction is NAD(+) + (deoxyribonucleotide)n-3'-hydroxyl + 5'-phospho-(deoxyribonucleotide)m = (deoxyribonucleotide)n+m + AMP + beta-nicotinamide D-nucleotide.. In terms of biological role, DNA ligase that catalyzes the formation of phosphodiester linkages between 5'-phosphoryl and 3'-hydroxyl groups in double-stranded DNA using NAD as a coenzyme and as the energy source for the reaction. It is essential for DNA replication and repair of damaged DNA. The polypeptide is DNA ligase (Lysinibacillus sphaericus (strain C3-41)).